A 156-amino-acid chain; its full sequence is Small ribosomal subunit protein uS7 (156 aa).

The protein belongs to the universal ribosomal protein uS7 family. Part of the 30S ribosomal subunit. Contacts proteins S9 and S11.

Functionally, one of the primary rRNA binding proteins, it binds directly to 16S rRNA where it nucleates assembly of the head domain of the 30S subunit. Is located at the subunit interface close to the decoding center, probably blocks exit of the E-site tRNA. This chain is Small ribosomal subunit protein uS7, found in Hamiltonella defensa subsp. Acyrthosiphon pisum (strain 5AT).